Consider the following 446-residue polypeptide: Putrescine N-hydroxylase (446 aa).

FAD is bound by residues Phe17, Asp37, Ser38, Lys39, Trp44, and His45. Thr54, Gln56, and Arg98 together coordinate NADP(+). Gln56 lines the FAD pocket. FAD is bound at residue Val121. Ser199, Lys223, Tyr267, and Leu301 together coordinate NADP(+). FAD contacts are provided by Asn378, Pro389, and Leu391.

The protein belongs to the lysine N(6)-hydroxylase/L-ornithine N(5)-oxygenase family. As to quaternary structure, homotetramer. FAD serves as cofactor.

The enzyme catalyses putrescine + NADPH + O2 = N-hydroxyputrescine + NADP(+) + H2O. It participates in siderophore biosynthesis. N-hydroxylating monooxygenase involved in the biosynthesis of fimsbactin A, the major siderophore produced by A.baumannii. Catalyzes the N-hydroxylation of the aliphatic diamine putrescine into N-hydroxyputrescine (NHP). Putrescine is the preferred substrate, but the enzyme can also catalyze the N-hydroxylation of cadaverine, with 4-fold lower catalytic efficiency. Cannot use lysine or ornithine as substrates. Uses both NADPH and NADH as the reducing cofactor with a preference for NADPH. This Acinetobacter baumannii (strain ATCC 17978 / DSM 105126 / CIP 53.77 / LMG 1025 / NCDC KC755 / 5377) protein is Putrescine N-hydroxylase.